We begin with the raw amino-acid sequence, 222 residues long: Uracil-DNA glycosylase (222 aa).

Asp-66 functions as the Proton acceptor in the catalytic mechanism.

The protein belongs to the uracil-DNA glycosylase (UDG) superfamily. UNG family.

The protein localises to the cytoplasm. It catalyses the reaction Hydrolyzes single-stranded DNA or mismatched double-stranded DNA and polynucleotides, releasing free uracil.. Functionally, excises uracil residues from the DNA which can arise as a result of misincorporation of dUMP residues by DNA polymerase or due to deamination of cytosine. In Porphyromonas gingivalis (strain ATCC 33277 / DSM 20709 / CIP 103683 / JCM 12257 / NCTC 11834 / 2561), this protein is Uracil-DNA glycosylase.